The sequence spans 462 residues: cAMP-dependent protein kinase regulatory subunit (462 aa).

Residues Thr54–Phe203 form a dimerization and phosphorylation region. Residues Phe79 to Tyr157 are disordered. Residues Gly80–Pro102 show a composition bias toward low complexity. Ser164 bears the Phosphoserine mark. 3',5'-cyclic AMP contacts are provided by residues Leu204 to Glu333, Glu282, Arg291, Ile336 to Val453, Glu401, and Arg410.

This sequence belongs to the cAMP-dependent kinase regulatory chain family. Tetramer, composed of 2 regulatory (R) and 2 catalytic (C) subunits. In the presence of cAMP it dissociates into 2 active monomeric C subunits and an R dimer.

This chain is cAMP-dependent protein kinase regulatory subunit (pkar1), found in Hypocrea atroviridis (Trichoderma atroviride).